The sequence spans 286 residues: Beta-lactamase SHV-5 (286 aa).

The signal sequence occupies residues 1–21 (MRYIRLCIISLLATLPLAVHA). The Acyl-ester intermediate role is filled by S66. A disulfide bond links C73 and C119. E164 (proton acceptor) is an active-site residue. Residue 230-232 (KTG) coordinates substrate.

It belongs to the class-A beta-lactamase family.

It carries out the reaction a beta-lactam + H2O = a substituted beta-amino acid. Its function is as follows. SHV enzymes hydrolyze broad spectrum cephalosporins notably cefotaxime and ceftazidime. SHV-5 causes particularly high levels of resistance to aztreonam and ceftazidime. This chain is Beta-lactamase SHV-5 (bla), found in Klebsiella pneumoniae.